The following is a 294-amino-acid chain: Dolichol-phosphate mannosyltransferase (294 aa).

The interval 1-27 is disordered; sequence MSIALDMDASAKMRKQPGSSGWSTSST. At 1 to 263 the chain is on the cytoplasmic side; that stretch reads MSIALDMDAS…QQLVELYRFR (263 aa). Residues 17–27 are compositionally biased toward low complexity; sequence PGSSGWSTSST. GDP-alpha-D-mannose contacts are provided by Pro-35, Glu-39, Val-70, Asp-72, Asp-123, Ala-124, Asp-125, Gln-127, Arg-151, Lys-211, Arg-237, and Lys-243. Residues Asp-125 and Gln-127 each coordinate Mg(2+). Mn(2+)-binding residues include Asp-125 and Gln-127. A helical transmembrane segment spans residues 264–284; the sequence is FGTVPIVFVLIVLLVLALYIW. Residues 285–294 lie on the Lumenal side of the membrane; that stretch reads SHVLAPMLGA.

This sequence belongs to the glycosyltransferase 2 family. The cofactor is Mg(2+). Mn(2+) serves as cofactor. Requires Ca(2+) as cofactor.

It is found in the endoplasmic reticulum membrane. The catalysed reaction is a di-trans,poly-cis-dolichyl phosphate + GDP-alpha-D-mannose = a di-trans,poly-cis-dolichyl beta-D-mannosyl phosphate + GDP. Its pathway is protein modification; protein glycosylation. In terms of biological role, transfers mannose from GDP-mannose to dolichol monophosphate to form dolichol phosphate mannose (Dol-P-Man) which is the mannosyl donor in pathways leading to N-glycosylation, glycosyl phosphatidylinositol membrane anchoring, and O-mannosylation of proteins. The protein is Dolichol-phosphate mannosyltransferase (DPM1) of Mycosarcoma maydis (Corn smut fungus).